The chain runs to 51 residues: Large ribosomal subunit protein eL39 (51 aa).

Positions 1–23 are disordered; the sequence is MPSQKSFRTKQKLAKAQKQNRPL.

It belongs to the eukaryotic ribosomal protein eL39 family. Component of the large ribosomal subunit. Mature ribosomes consist of a small (40S) and a large (60S) subunit. The 40S subunit contains about 32 different proteins and 1 molecule of RNA (18S). The 60S subunit contains 45 different proteins and 3 molecules of RNA (25S, 5.8S and 5S).

The protein resides in the cytoplasm. Its function is as follows. Component of the ribosome, a large ribonucleoprotein complex responsible for the synthesis of proteins in the cell. The small ribosomal subunit (SSU) binds messenger RNAs (mRNAs) and translates the encoded message by selecting cognate aminoacyl-transfer RNA (tRNA) molecules. The large subunit (LSU) contains the ribosomal catalytic site termed the peptidyl transferase center (PTC), which catalyzes the formation of peptide bonds, thereby polymerizing the amino acids delivered by tRNAs into a polypeptide chain. The nascent polypeptides leave the ribosome through a tunnel in the LSU and interact with protein factors that function in enzymatic processing, targeting, and the membrane insertion of nascent chains at the exit of the ribosomal tunnel. The polypeptide is Large ribosomal subunit protein eL39 (Candida albicans (strain SC5314 / ATCC MYA-2876) (Yeast)).